Consider the following 181-residue polypeptide: MQNVTDSFVSLGHWPSAGGFGFNTDILATNPINLSVVLGVVIYFGKGVLNDLLDNRKQRILSTIRNSEELRQAAIEQLEKARARLRKVETEANDYRVNGYSEIEREKQNLIKATSENLERLENYKNETLLFEQQRAINQVRQRVFQQALQGALGTLNSCLNSELHFRTISANIGILGVMEE.

Residues 27–49 (LATNPINLSVVLGVVIYFGKGVL) traverse the membrane as a helical segment.

Belongs to the ATPase B chain family. As to quaternary structure, F-type ATPases have 2 components, F(1) - the catalytic core - and F(0) - the membrane proton channel. F(1) has five subunits: alpha(3), beta(3), gamma(1), delta(1), epsilon(1). F(0) has four main subunits: a(1), b(1), b'(1) and c(10-14). The alpha and beta chains form an alternating ring which encloses part of the gamma chain. F(1) is attached to F(0) by a central stalk formed by the gamma and epsilon chains, while a peripheral stalk is formed by the delta, b and b' chains.

The protein localises to the plastid. It is found in the chloroplast thylakoid membrane. F(1)F(0) ATP synthase produces ATP from ADP in the presence of a proton or sodium gradient. F-type ATPases consist of two structural domains, F(1) containing the extramembraneous catalytic core and F(0) containing the membrane proton channel, linked together by a central stalk and a peripheral stalk. During catalysis, ATP synthesis in the catalytic domain of F(1) is coupled via a rotary mechanism of the central stalk subunits to proton translocation. Functionally, component of the F(0) channel, it forms part of the peripheral stalk, linking F(1) to F(0). The sequence is that of ATP synthase subunit b, chloroplastic from Lemna minor (Common duckweed).